The following is a 184-amino-acid chain: Ribosome-recycling factor (184 aa).

Positions 134-167 are disordered; it reads MNDQLKKDEKNGDITEDELRSGTEDVQKATDNSI.

Belongs to the RRF family.

It localises to the cytoplasm. In terms of biological role, responsible for the release of ribosomes from messenger RNA at the termination of protein biosynthesis. May increase the efficiency of translation by recycling ribosomes from one round of translation to another. This is Ribosome-recycling factor from Staphylococcus aureus (strain Mu3 / ATCC 700698).